Consider the following 362-residue polypeptide: Histidinol-phosphate aminotransferase (362 aa).

K218 carries the N6-(pyridoxal phosphate)lysine modification.

Belongs to the class-II pyridoxal-phosphate-dependent aminotransferase family. Histidinol-phosphate aminotransferase subfamily. Homodimer. Pyridoxal 5'-phosphate serves as cofactor.

The catalysed reaction is L-histidinol phosphate + 2-oxoglutarate = 3-(imidazol-4-yl)-2-oxopropyl phosphate + L-glutamate. The protein operates within amino-acid biosynthesis; L-histidine biosynthesis; L-histidine from 5-phospho-alpha-D-ribose 1-diphosphate: step 7/9. In Xanthomonas campestris pv. campestris (strain B100), this protein is Histidinol-phosphate aminotransferase.